The primary structure comprises 255 residues: tRNA pseudouridine synthase A (255 aa).

Residue Asp-43 is the Nucleophile of the active site. Tyr-94 serves as a coordination point for substrate.

This sequence belongs to the tRNA pseudouridine synthase TruA family.

The enzyme catalyses uridine(38/39/40) in tRNA = pseudouridine(38/39/40) in tRNA. In terms of biological role, formation of pseudouridine at positions 38, 39 and 40 in the anticodon stem and loop of transfer RNAs. This is tRNA pseudouridine synthase A from Pyrobaculum islandicum (strain DSM 4184 / JCM 9189 / GEO3).